The chain runs to 845 residues: Ribonucleoside-diphosphate reductase subunit alpha (845 aa).

The region spanning 1–98 is the ATP-cone domain; sequence MHIIKRNGEP…LYRDDRTKKR (98 aa). Substrate contacts are provided by residues Thr303, 318–319, Gly347, 534–538, and 725–729; these read SC, NLCTE, and PTSST. Cys319 and Cys574 are disulfide-bonded. Residue Asn534 is the Proton acceptor of the active site. Cys536 serves as the catalytic Cysteine radical intermediate. Glu538 serves as the catalytic Proton acceptor.

Belongs to the ribonucleoside diphosphate reductase large chain family. As to quaternary structure, tetramer of two alpha and two beta subunits.

The catalysed reaction is a 2'-deoxyribonucleoside 5'-diphosphate + [thioredoxin]-disulfide + H2O = a ribonucleoside 5'-diphosphate + [thioredoxin]-dithiol. Its activity is regulated as follows. Under complex allosteric control mediated by deoxynucleoside triphosphates and ATP binding. The type of nucleotide bound at the specificity site determines substrate preference. It seems probable that ATP makes the enzyme reduce CDP and UDP, dGTP favors ADP reduction and dTTP favors GDP reduction. Its function is as follows. Provides the precursors necessary for DNA synthesis. Catalyzes the biosynthesis of deoxyribonucleotides from the corresponding ribonucleotides. The protein is Ribonucleoside-diphosphate reductase subunit alpha (nrdA) of Treponema pallidum (strain Nichols).